Consider the following 664-residue polypeptide: Protein-arginine deiminase type-3 (664 aa).

This sequence belongs to the protein arginine deiminase family. Requires Ca(2+) as cofactor. Epidermis and hair follicles.

The protein resides in the cytoplasm. The enzyme catalyses L-arginyl-[protein] + H2O = L-citrullyl-[protein] + NH4(+). Its function is as follows. Catalyzes the deimination of arginine residues of proteins. The polypeptide is Protein-arginine deiminase type-3 (Padi3) (Rattus norvegicus (Rat)).